A 381-amino-acid chain; its full sequence is Protein pelota homolog (381 aa).

It belongs to the eukaryotic release factor 1 family. Pelota subfamily. As to quaternary structure, component of the Pelota-HBS1L complex, also named Dom34-Hbs1 complex, composed of pelo-1 and hbs-1. A divalent metal cation is required as a cofactor.

The protein resides in the cytoplasm. Its subcellular location is the nucleus. In terms of biological role, component of the Pelota-HBS1L complex, a complex that recognizes stalled ribosomes and triggers the No-Go Decay (NGD) pathway. In the Pelota-HBS1L complex, pelo-1 recognizes ribosomes stalled at the 3' end of an mRNA and engages stalled ribosomes by destabilizing mRNA in the mRNA channel. Following ribosome-binding, the Pelota-HBS1L complex promotes the disassembly of stalled ribosomes, followed by degradation of damaged mRNAs as part of the NGD pathway. The sequence is that of Protein pelota homolog from Caenorhabditis elegans.